The chain runs to 556 residues: Butanoate--CoA ligase AAE1 (556 aa).

The Microbody targeting signal signature appears at 554-556 (SKL).

It belongs to the ATP-dependent AMP-binding enzyme family. Expressed in roots, leaves, stems, flowers and developing seeds.

It is found in the peroxisome. It carries out the reaction butanoate + ATP + CoA = butanoyl-CoA + AMP + diphosphate. The catalysed reaction is hexanoate + ATP + CoA = hexanoyl-CoA + AMP + diphosphate. The enzyme catalyses pentanoate + ATP + CoA = pentanoyl-CoA + AMP + diphosphate. It catalyses the reaction 4-methylpentanoate + ATP + CoA = 4-methylpentanoyl-CoA + AMP + diphosphate. Its function is as follows. Catalyzes the ligation of CoA on butanoate to produce butanoyl-CoA. Can also use hexanoate, pentanoate and 4-methylpentanoate as substrates with a lower efficiency. This Arabidopsis thaliana (Mouse-ear cress) protein is Butanoate--CoA ligase AAE1.